The primary structure comprises 830 residues: Dimethylglycine oxidase (830 aa).

FAD contacts are provided by residues 14–15 (IV), 35–36 (DQ), 45–48 (STSH), L52, and V174. H48 carries the post-translational modification Pros-8alpha-FAD histidine. Active-site residues include H225 and Y259. FAD contacts are provided by residues Y259 and 360–363 (VWVT). Y539 serves as a coordination point for (6S)-5,6,7,8-tetrahydrofolate. D552 functions as the For 5,10-methylenetetrahydrofolate synthesis activity in the catalytic mechanism. (6S)-5,6,7,8-tetrahydrofolate contacts are provided by residues T554, G566, and 658 to 660 (ELY).

It belongs to the GcvT family. Requires FAD as cofactor.

The enzyme catalyses N,N-dimethylglycine + O2 + H2O = sarcosine + formaldehyde + H2O2. It catalyses the reaction N,N-dimethylglycine + (6S)-5,6,7,8-tetrahydrofolate + O2 = sarcosine + (6R)-5,10-methylene-5,6,7,8-tetrahydrofolate + H2O2. In terms of biological role, catalyzes the oxidative demethylation of N,N-dimethylglycine to yield sarcosine, formaldehyde and hydrogen peroxide. The oxidation of dimethylglycine is coupled to the synthesis of 5,10-methylenetetrahydrofolate through an unusual substrate channeling mechanism. This channeling occurs by nonbiased diffusion of the iminium intermediate through a large solvent cavity connecting active site 1 (N-terminus) and active site 2 (C-terminus). The synthesis of 5,10-methylenetetrahydrofolate (at active site 2) prevents the accumulation of formaldehyde, formed by hydrolysis of the iminium intermediate product (at active site 1). Does not oxidize sarcosine. This chain is Dimethylglycine oxidase (dmg), found in Arthrobacter globiformis.